A 278-amino-acid polypeptide reads, in one-letter code: Tetraspanin-13 (278 aa).

Over 1-25 (MARDKEDQNNENPSIVQNMSFPFNT) the chain is Cytoplasmic. Residues 26-46 (IFLISSAIFLVTAAFWFVAVM) traverse the membrane as a helical segment. Residues 47–62 (TLHYRTDECNRFVTTP) lie on the Extracellular side of the membrane. Residues 63-83 (GIFISFSLLAMSLTGFYAAYF) form a helical membrane-spanning segment. The Cytoplasmic segment spans residues 84–92 (KSDCLFRIH). Residues 93–113 (FFIFFLWMFVVVSKAIFVIFL) form a helical membrane-spanning segment. Topologically, residues 114–249 (HKETNPRLFP…DVHNTSFSIT (136 aa)) are extracellular. 3 N-linked (GlcNAc...) asparagine glycosylation sites follow: Asn-202, Asn-220, and Asn-243. The chain crosses the membrane as a helical span at residues 250–270 (VNIIHIIFSLCIGMTGWFAWL). The Cytoplasmic segment spans residues 271–278 (RILRESQK).

It belongs to the tetraspanin (TM4SF) family.

Its subcellular location is the membrane. Functionally, may be involved in the regulation of cell differentiation. This chain is Tetraspanin-13 (TET13), found in Arabidopsis thaliana (Mouse-ear cress).